The sequence spans 339 residues: tRNA N6-adenosine threonylcarbamoyltransferase (339 aa).

Fe cation contacts are provided by histidine 111 and histidine 115. Substrate contacts are provided by residues leucine 134–glycine 138, aspartate 167, glycine 180, and asparagine 272. Aspartate 300 serves as a coordination point for Fe cation.

It belongs to the KAE1 / TsaD family. The cofactor is Fe(2+).

Its subcellular location is the cytoplasm. It carries out the reaction L-threonylcarbamoyladenylate + adenosine(37) in tRNA = N(6)-L-threonylcarbamoyladenosine(37) in tRNA + AMP + H(+). Its function is as follows. Required for the formation of a threonylcarbamoyl group on adenosine at position 37 (t(6)A37) in tRNAs that read codons beginning with adenine. Is involved in the transfer of the threonylcarbamoyl moiety of threonylcarbamoyl-AMP (TC-AMP) to the N6 group of A37, together with TsaE and TsaB. TsaD likely plays a direct catalytic role in this reaction. This is tRNA N6-adenosine threonylcarbamoyltransferase from Vibrio vulnificus (strain YJ016).